A 169-amino-acid polypeptide reads, in one-letter code: Cysteine synthase B (169 aa).

Lys45 carries the post-translational modification N6-(pyridoxal phosphate)lysine. Asn75 is a pyridoxal 5'-phosphate binding site. Residues 146–169 are disordered; it reads ANGDNPEAHYTSTGPEIWRQTGGT.

It belongs to the cysteine synthase/cystathionine beta-synthase family. Requires pyridoxal 5'-phosphate as cofactor.

The catalysed reaction is O-acetyl-L-serine + hydrogen sulfide = L-cysteine + acetate. It functions in the pathway amino-acid biosynthesis; L-cysteine biosynthesis; L-cysteine from L-serine: step 2/2. The sequence is that of Cysteine synthase B (cysM) from Pseudomonas syringae pv. syringae.